The sequence spans 160 residues: Nucleotide-binding protein VFMJ11_1323 (160 aa).

Belongs to the YajQ family.

In terms of biological role, nucleotide-binding protein. This is Nucleotide-binding protein VFMJ11_1323 from Aliivibrio fischeri (strain MJ11) (Vibrio fischeri).